The chain runs to 238 residues: ATP synthase subunit a (238 aa).

The next 5 membrane-spanning stretches (helical) occupy residues 15-35, 76-96, 111-131, 167-187, and 208-230; these read IFNL…FVFI, YSLF…LGLM, PTAN…LTHI, LALR…LLLL, and AFSV…VYLG.

The protein belongs to the ATPase A chain family. In terms of assembly, F-type ATPases have 2 components, CF(1) - the catalytic core - and CF(0) - the membrane proton channel. CF(1) has five subunits: alpha(3), beta(3), gamma(1), delta(1), epsilon(1). CF(0) has three main subunits: a(1), b(2) and c(9-12). The alpha and beta chains form an alternating ring which encloses part of the gamma chain. CF(1) is attached to CF(0) by a central stalk formed by the gamma and epsilon chains, while a peripheral stalk is formed by the delta and b chains.

Its subcellular location is the cell membrane. Its function is as follows. Key component of the proton channel; it plays a direct role in the translocation of protons across the membrane. The protein is ATP synthase subunit a of Streptococcus pneumoniae serotype 19F (strain G54).